The primary structure comprises 474 residues: tRNA-2-methylthio-N(6)-dimethylallyladenosine synthase (474 aa).

The MTTase N-terminal domain occupies 3-120; that stretch reads KKLHIKTWGC…LPDMIEQVRR (118 aa). [4Fe-4S] cluster is bound by residues Cys-12, Cys-49, Cys-83, Cys-157, Cys-161, and Cys-164. In terms of domain architecture, Radical SAM core spans 143–375; it reads RAEGPTAFVS…QDRITQQAMR (233 aa). The TRAM domain occupies 378 to 441; it reads RHMMGTVQRI…TNSLRGKFIR (64 aa).

The protein belongs to the methylthiotransferase family. MiaB subfamily. Monomer. [4Fe-4S] cluster is required as a cofactor.

The protein resides in the cytoplasm. It carries out the reaction N(6)-dimethylallyladenosine(37) in tRNA + (sulfur carrier)-SH + AH2 + 2 S-adenosyl-L-methionine = 2-methylsulfanyl-N(6)-dimethylallyladenosine(37) in tRNA + (sulfur carrier)-H + 5'-deoxyadenosine + L-methionine + A + S-adenosyl-L-homocysteine + 2 H(+). Functionally, catalyzes the methylthiolation of N6-(dimethylallyl)adenosine (i(6)A), leading to the formation of 2-methylthio-N6-(dimethylallyl)adenosine (ms(2)i(6)A) at position 37 in tRNAs that read codons beginning with uridine. The polypeptide is tRNA-2-methylthio-N(6)-dimethylallyladenosine synthase (Shewanella sp. (strain MR-4)).